The primary structure comprises 399 residues: MKLADLSSPAFLENPYPLYETLRRQGPFVSIGPNALMTGRYSIVDGLLHNRNMGKSYMESIRVRYGDDALDMPLFQGFNRMFLMLNPPVHTHLRGLVMQAFTGRESESMRPLAIDTAHRLIDDFEQKSSVDLVTEFSFPLPMRIICRMMDVDISDAISLSVAVSNLAKVFDPAPMSPDELVHASAAYEELAHYFTRLIELRRAQHGTDLISMLLRAEEEGQKLTHDEIVSNVILLLLGGYETTSNMIGNALIALHRHPKQLARLKSDLSLMPQAVLECLRYDGSVQFTIRAAMDDVSIEGDVVPRGTIVFLMLGAANRDPAQFTDPDHLEITRKQGRLQSFGAGVHHCLGYRLALVELECALTVLLERLPHLRLANLDTLSWNQRGNLRGVNALIADLH.

Cysteine 348 contacts heme.

It belongs to the cytochrome P450 family. The cofactor is heme.

The polypeptide is Putative cytochrome P450 133B2 (cyp133B2) (Xylella fastidiosa (strain Temecula1 / ATCC 700964)).